The following is a 354-amino-acid chain: Homeobox protein Nkx-2.4 (354 aa).

A DNA-binding region (homeobox) is located at residues 188-247 (RRKRRVLFSQAQVYELERRFKQQKYLSAPEREHLASMIHLTPTQVKIWFQNHRYKMKRQA). The segment at 245 to 329 (RQAKDKAAQQ…PALHGPGGGL (85 aa)) is disordered. Residues 262–272 (GPPPPPPPPSP) show a composition bias toward pro residues. Over residues 290–304 (GAGTPTPGQGGQQPQ) the composition is skewed to low complexity.

The protein belongs to the NK-2 homeobox family. In the embryo it is detected in the posterior hypothalamus and later in the head. In the adult it is detected only in testis.

The protein localises to the nucleus. Its function is as follows. Probable transcription factor. This Mus musculus (Mouse) protein is Homeobox protein Nkx-2.4 (Nkx2-4).